Consider the following 180-residue polypeptide: Hypoxanthine-guanine phosphoribosyltransferase (180 aa).

Residues Lys40, 99 to 107, Lys131, and Asp159 contribute to the GMP site; that span reads EDIVDSGLT. Catalysis depends on Asp103, which acts as the Proton acceptor. Position 159 (Asp159) interacts with Mg(2+).

It belongs to the purine/pyrimidine phosphoribosyltransferase family. It depends on Mg(2+) as a cofactor.

The protein localises to the cytoplasm. The enzyme catalyses IMP + diphosphate = hypoxanthine + 5-phospho-alpha-D-ribose 1-diphosphate. The catalysed reaction is GMP + diphosphate = guanine + 5-phospho-alpha-D-ribose 1-diphosphate. It participates in purine metabolism; IMP biosynthesis via salvage pathway; IMP from hypoxanthine: step 1/1. Its function is as follows. Converts guanine to guanosine monophosphate, and hypoxanthine to inosine monophosphate. Transfers the 5-phosphoribosyl group from 5-phosphoribosylpyrophosphate onto the purine. Plays a central role in the generation of purine nucleotides through the purine salvage pathway. The protein is Hypoxanthine-guanine phosphoribosyltransferase (hprT) of Dictyostelium discoideum (Social amoeba).